We begin with the raw amino-acid sequence, 106 residues long: Large ribosomal subunit protein uL24 (106 aa).

Belongs to the universal ribosomal protein uL24 family. As to quaternary structure, part of the 50S ribosomal subunit.

Its function is as follows. One of two assembly initiator proteins, it binds directly to the 5'-end of the 23S rRNA, where it nucleates assembly of the 50S subunit. In terms of biological role, one of the proteins that surrounds the polypeptide exit tunnel on the outside of the subunit. The polypeptide is Large ribosomal subunit protein uL24 (Rhodospirillum rubrum (strain ATCC 11170 / ATH 1.1.1 / DSM 467 / LMG 4362 / NCIMB 8255 / S1)).